Reading from the N-terminus, the 215-residue chain is Sodium channel regulatory subunit beta-2 (215 aa).

Residues 1–29 (MHRDAWLPRPAFSLTGLSLFFSLVPPGRS) form the signal peptide. Topologically, residues 30 to 157 (MEVTAPTTLS…LEVPPERDST (128 aa)) are extracellular. In terms of domain architecture, Ig-like C2-type spans 32–154 (VTAPTTLSVL…QVLLEVPPER (123 aa)). 3 N-linked (GlcNAc...) asparagine glycosylation sites follow: N42, N66, and N74. 2 disulfide bridges follow: C50–C127 and C72–C75. A helical membrane pass occupies residues 158-179 (VAVIVGASVGGFLAVVILVLMV). The Cytoplasmic portion of the chain corresponds to 180–215 (VKCVRRKKEQKLSTDDLKTEEEGKMDGEGNAEDGTK). The tract at residues 188-215 (EQKLSTDDLKTEEEGKMDGEGNAEDGTK) is disordered. Positions 189–215 (QKLSTDDLKTEEEGKMDGEGNAEDGTK) are enriched in basic and acidic residues. A Phosphoserine modification is found at S192.

The protein belongs to the sodium channel auxiliary subunit SCN2B (TC 8.A.17) family. In terms of assembly, a voltage-gated sodium (Nav) channel consists of an ion-conducting pore-forming alpha subunit functional on its own that is regulated by one or more beta subunits. The beta subunit SCN2B is disulfide-linked to the pore-forming alpha subunit. Interacts with SCN1A; regulatory subunit of SCN1A/Nav1.1. Interacts with SCN2A; regulatory subunit of SCN2A/Nav1.2. Interacts with SCN3A; regulatory subunit of SCN3A/Nav1.3. Interacts with SCN5A; regulatory subunit of SCN5A/Nav1.5. Interacts with SCN8A; regulatory subunit of SCN8A/Nav1.6. Interacts with SCN9A; regulatory subunit of SCN9A/Nav1.7. Interacts with SCN10A; regulatory subunit of SCN10A/Nav1.8. Interacts with TNR; may play a crucial role in clustering and regulation of activity of SCN2B-containing Nav channels at nodes of Ranvier.

It localises to the cell membrane. It is found in the cell projection. The protein resides in the axon. Functionally, regulatory subunit of multiple voltage-gated sodium (Nav) channels directly mediating the depolarization of excitable membranes. Navs, also called VGSCs (voltage-gated sodium channels) or VDSCs (voltage-dependent sodium channels), operate by switching between closed and open conformations depending on the voltage difference across the membrane. In the open conformation they allow Na(+) ions to selectively pass through the pore, along their electrochemical gradient. The influx of Na+ ions provokes membrane depolarization, initiating the propagation of electrical signals throughout cells and tissues. The accessory beta subunits participate in localization and functional modulation of the Nav channels. Modulates the activity of SCN1A/Nav1.1, SCN2A/Nav1.2, SCN2A/Nav1.3, SCN5A/Nav1.5, SCN8A/Nav1.6, SCN9A/Nav1.7 and SCN10A/Nav1.8. This chain is Sodium channel regulatory subunit beta-2, found in Mus musculus (Mouse).